The sequence spans 378 residues: Glutamate 5-kinase (378 aa).

Lys19 contributes to the ATP binding site. Positions 60, 147, and 159 each coordinate substrate. ATP-binding positions include 179-180 (SD) and 221-227 (SGGMRTK). The PUA domain occupies 285 to 362 (KGTLTIDAGA…GEMEQLLGYR (78 aa)).

The protein belongs to the glutamate 5-kinase family.

The protein localises to the cytoplasm. The catalysed reaction is L-glutamate + ATP = L-glutamyl 5-phosphate + ADP. It participates in amino-acid biosynthesis; L-proline biosynthesis; L-glutamate 5-semialdehyde from L-glutamate: step 1/2. Its function is as follows. Catalyzes the transfer of a phosphate group to glutamate to form L-glutamate 5-phosphate. This Gluconobacter oxydans (strain 621H) (Gluconobacter suboxydans) protein is Glutamate 5-kinase.